The following is a 224-amino-acid chain: Ribonuclease 3 (224 aa).

In terms of domain architecture, RNase III spans 5 to 127 (LERLCRRLNY…ILAAIYLDGG (123 aa)). Residue Glu-40 coordinates Mg(2+). The active site involves Asp-44. 2 residues coordinate Mg(2+): Asp-113 and Glu-116. Glu-116 is an active-site residue. The DRBM domain occupies 154 to 224 (DAKTQLQEFL…AKAMLEQLQG (71 aa)).

This sequence belongs to the ribonuclease III family. In terms of assembly, homodimer. Requires Mg(2+) as cofactor.

The protein resides in the cytoplasm. The enzyme catalyses Endonucleolytic cleavage to 5'-phosphomonoester.. Functionally, digests double-stranded RNA. Involved in the processing of primary rRNA transcript to yield the immediate precursors to the large and small rRNAs (23S and 16S). Processes some mRNAs, and tRNAs when they are encoded in the rRNA operon. Processes pre-crRNA and tracrRNA of type II CRISPR loci if present in the organism. This chain is Ribonuclease 3, found in Legionella pneumophila subsp. pneumophila (strain Philadelphia 1 / ATCC 33152 / DSM 7513).